A 314-amino-acid polypeptide reads, in one-letter code: Glutathione synthetase (314 aa).

The region spanning 125 to 311 (EKIAAQLFPQ…IAGQLFDAIE (187 aa)) is the ATP-grasp domain. An ATP-binding site is contributed by 151–208 (FVQKQEQAILKPLDGMGGHSIFRSSNGDPNLNVILETLTDGGRTLAIAQRYLQQIIEG). Mg(2+) contacts are provided by Glu-282 and Asn-284.

This sequence belongs to the prokaryotic GSH synthase family. Mg(2+) serves as cofactor. The cofactor is Mn(2+).

The enzyme catalyses gamma-L-glutamyl-L-cysteine + glycine + ATP = glutathione + ADP + phosphate + H(+). The protein operates within sulfur metabolism; glutathione biosynthesis; glutathione from L-cysteine and L-glutamate: step 2/2. The chain is Glutathione synthetase from Xylella fastidiosa (strain Temecula1 / ATCC 700964).